We begin with the raw amino-acid sequence, 787 residues long: DNA ligase (787 aa).

Residues 32–36 (DVEYD), 81–82 (SL), and E121 each bind NAD(+). The active-site N6-AMP-lysine intermediate is the K123. 4 residues coordinate NAD(+): R144, E181, K297, and K321. Positions 415, 418, 445, and 451 each coordinate Zn(2+). In terms of domain architecture, BRCT spans 703–787 (VEGLPLAGQT…RLIELGVAVD (85 aa)).

Belongs to the NAD-dependent DNA ligase family. LigA subfamily. The cofactor is Mg(2+). It depends on Mn(2+) as a cofactor.

It catalyses the reaction NAD(+) + (deoxyribonucleotide)n-3'-hydroxyl + 5'-phospho-(deoxyribonucleotide)m = (deoxyribonucleotide)n+m + AMP + beta-nicotinamide D-nucleotide.. DNA ligase that catalyzes the formation of phosphodiester linkages between 5'-phosphoryl and 3'-hydroxyl groups in double-stranded DNA using NAD as a coenzyme and as the energy source for the reaction. It is essential for DNA replication and repair of damaged DNA. The protein is DNA ligase of Pseudomonas syringae pv. syringae (strain B728a).